Here is a 474-residue protein sequence, read N- to C-terminus: ATP synthase subunit beta (474 aa).

158–165 (GGAGVGKT) contacts ATP.

Belongs to the ATPase alpha/beta chains family. As to quaternary structure, F-type ATPases have 2 components, CF(1) - the catalytic core - and CF(0) - the membrane proton channel. CF(1) has five subunits: alpha(3), beta(3), gamma(1), delta(1), epsilon(1). CF(0) has three main subunits: a(1), b(2) and c(9-12). The alpha and beta chains form an alternating ring which encloses part of the gamma chain. CF(1) is attached to CF(0) by a central stalk formed by the gamma and epsilon chains, while a peripheral stalk is formed by the delta and b chains.

Its subcellular location is the cell membrane. The catalysed reaction is ATP + H2O + 4 H(+)(in) = ADP + phosphate + 5 H(+)(out). In terms of biological role, produces ATP from ADP in the presence of a proton gradient across the membrane. The catalytic sites are hosted primarily by the beta subunits. This chain is ATP synthase subunit beta, found in Tropheryma whipplei (strain Twist) (Whipple's bacillus).